Consider the following 88-residue polypeptide: Putative membrane protein insertion efficiency factor (88 aa).

The interval 68–88 (VPPPNSDTRARGEADARSHRL) is disordered. A compositionally biased stretch (basic and acidic residues) spans 75–88 (TRARGEADARSHRL).

This sequence belongs to the UPF0161 family.

It localises to the cell inner membrane. Functionally, could be involved in insertion of integral membrane proteins into the membrane. This is Putative membrane protein insertion efficiency factor from Burkholderia ambifaria (strain MC40-6).